The following is a 110-amino-acid chain: Proline-rich protein 15-like protein A (110 aa).

Disordered regions lie at residues 29–51 and 65–110; these read IAGD…TDSQ and TKGR…KSGK. Residues 65–85 show a composition bias toward basic residues; it reads TKGRHVKVSHSGRFKEKKRIR. Positions 100–110 are enriched in polar residues; sequence TTANENNKSGK.

This sequence belongs to the PRR15 family.

This Danio rerio (Zebrafish) protein is Proline-rich protein 15-like protein A (prr15la).